A 314-amino-acid chain; its full sequence is Inactive chitinase-like protein 1 (314 aa).

Residues Met-1–Ala-19 form the signal peptide. Residues Glu-20–Gly-60 form the Chitin-binding type-1 domain. 7 disulfides stabilise this stretch: Cys-22/Cys-37, Cys-31/Cys-43, Cys-36/Cys-50, Cys-54/Cys-58, Cys-92/Cys-154, Cys-166/Cys-174, and Cys-273/Cys-305.

Belongs to the glycosyl hydrolase 19 family. Chitinase class I subfamily.

Inactive chitinase-like protein that does not exhibit hydrolytic activity toward chitin. Binds strongly to chitin and possesses antifungal activity toward the fungal pathogen Altenaria alternata in plate assays. Inhibits the growth of Fusarium oxysporum on plate assays. Probably involved in defense against fungal pathogens through a mechanism that only involves carbohydrate binding. In Hevea brasiliensis (Para rubber tree), this protein is Inactive chitinase-like protein 1.